Here is a 360-residue protein sequence, read N- to C-terminus: Phospho-N-acetylmuramoyl-pentapeptide-transferase (360 aa).

10 helical membrane-spanning segments follow: residues 19–39 (LTYL…LSIF), 73–93 (TMGG…WADL), 95–115 (SVYT…GWTD), 136–156 (YLSL…DTPI), 173–193 (GILF…AVNL), 199–219 (GLAI…AYLS), 233–253 (IAGA…GLGF), 263–283 (VFMG…VAVV), 288–308 (LAFA…MIQV), and 338–358 (VTIR…STLK).

This sequence belongs to the glycosyltransferase 4 family. MraY subfamily. Mg(2+) serves as cofactor.

The protein localises to the cell inner membrane. The enzyme catalyses UDP-N-acetyl-alpha-D-muramoyl-L-alanyl-gamma-D-glutamyl-meso-2,6-diaminopimeloyl-D-alanyl-D-alanine + di-trans,octa-cis-undecaprenyl phosphate = di-trans,octa-cis-undecaprenyl diphospho-N-acetyl-alpha-D-muramoyl-L-alanyl-D-glutamyl-meso-2,6-diaminopimeloyl-D-alanyl-D-alanine + UMP. Its pathway is cell wall biogenesis; peptidoglycan biosynthesis. In terms of biological role, catalyzes the initial step of the lipid cycle reactions in the biosynthesis of the cell wall peptidoglycan: transfers peptidoglycan precursor phospho-MurNAc-pentapeptide from UDP-MurNAc-pentapeptide onto the lipid carrier undecaprenyl phosphate, yielding undecaprenyl-pyrophosphoryl-MurNAc-pentapeptide, known as lipid I. The chain is Phospho-N-acetylmuramoyl-pentapeptide-transferase from Dichelobacter nodosus (strain VCS1703A).